The primary structure comprises 215 residues: Uracil phosphoribosyltransferase (215 aa).

5-phospho-alpha-D-ribose 1-diphosphate is bound by residues Arg-84, Arg-109, and 136 to 144; that span reads DPMLATGNT. Residues Ile-198 and 203 to 205 each bind uracil; that span reads GDA. A 5-phospho-alpha-D-ribose 1-diphosphate-binding site is contributed by Asp-204.

It belongs to the UPRTase family. It depends on Mg(2+) as a cofactor.

It catalyses the reaction UMP + diphosphate = 5-phospho-alpha-D-ribose 1-diphosphate + uracil. The protein operates within pyrimidine metabolism; UMP biosynthesis via salvage pathway; UMP from uracil: step 1/1. With respect to regulation, allosterically activated by GTP. Functionally, catalyzes the conversion of uracil and 5-phospho-alpha-D-ribose 1-diphosphate (PRPP) to UMP and diphosphate. This is Uracil phosphoribosyltransferase from Methanothermobacter thermautotrophicus (strain ATCC 29096 / DSM 1053 / JCM 10044 / NBRC 100330 / Delta H) (Methanobacterium thermoautotrophicum).